The chain runs to 377 residues: Alanine dehydrogenase (377 aa).

Substrate is bound by residues Arg15 and Lys74. The Proton donor/acceptor role is filled by His95. Residues Ser133, Asp197, Arg202, Ser219, 238–239, 266–269, and 304–307 contribute to the NAD(+) site; these read VL, VAID, and VGNM. Asp269 (proton donor/acceptor) is an active-site residue.

It belongs to the AlaDH/PNT family. As to quaternary structure, homohexamer.

The catalysed reaction is L-alanine + NAD(+) + H2O = pyruvate + NH4(+) + NADH + H(+). It functions in the pathway organosulfur degradation; alkanesulfonate degradation. Functionally, involved in an anaerobic respiration pathway that converts the sulfonate taurine (2-aminoethanesulfonate) to ammonia, acetate and sulfide. Acts as an alanine dehydrogenase that regenerates pyruvate, the amino group acceptor for the taurine--pyruvate aminotransferase enzyme, and liberates ammonia. The protein is Alanine dehydrogenase of Bilophila wadsworthia (strain 3_1_6).